Consider the following 1153-residue polypeptide: Protein unc-13 homolog 4B (1153 aa).

The disordered stretch occupies residues valine 54–serine 84. One can recognise a C2 1 domain in the interval alanine 162–serine 288. Ca(2+) is bound by residues aspartate 195, aspartate 201, aspartate 252, phenylalanine 253, and aspartate 254. Positions phenylalanine 637–methionine 755 constitute an MHD1 domain. In terms of domain architecture, MHD2 spans serine 869 to tyrosine 975. In terms of domain architecture, C2 2 spans proline 990–methionine 1114. Positions 1019, 1025, 1083, and 1085 each coordinate Ca(2+).

It belongs to the unc-13 family. In terms of assembly, interacts with Cam. Requires Ca(2+) as cofactor.

It is found in the cytoplasm. The protein localises to the cytoskeleton. The protein resides in the cell projection. It localises to the filopodium. Its subcellular location is the late endosome. It is found in the lysosome. Its function is as follows. Essential for tracheal development in embryos. Functions with the GTPase Rab39 and downstream of dnd, to regulate lumen fusion between previously separate tracheal branches (anastomosis). Essential component of secretory lysosome-related organelles (SLs) that are present in the tracheal fusion tip cells (FCs). Mediates intracellular fusion of the extending tracheal stalk cell lumen in the FCs by recruiting the SNARE complex component Syx1A to the SLs, this may then enable the SLs to interact with complementary SNAREs (such as Syb) present in the apical membrane of the FC-FC interface and the membranes of the separate tracheal stalk cells. May also function in the maturation and exocytosis of the SLs. The polypeptide is Protein unc-13 homolog 4B (Drosophila melanogaster (Fruit fly)).